The primary structure comprises 339 residues: Adenylosuccinate synthetase (339 aa).

GTP-binding positions include 12–18 (GDEGKGS) and 42–44 (GHS). Asp-13 functions as the Proton acceptor in the catalytic mechanism. Positions 13 and 42 each coordinate Mg(2+). Residues 13 to 16 (DEGK), 40 to 43 (NAGH), Thr-127, Arg-141, Gln-179, Thr-194, and Arg-256 contribute to the IMP site. His-43 serves as the catalytic Proton donor. 252 to 258 (TVTGRRR) serves as a coordination point for substrate. Residues Arg-258, 284-286 (MLD), and 324-326 (KTG) contribute to the GTP site.

The protein belongs to the adenylosuccinate synthetase family. As to quaternary structure, homodimer. Mg(2+) is required as a cofactor.

It is found in the cytoplasm. It catalyses the reaction IMP + L-aspartate + GTP = N(6)-(1,2-dicarboxyethyl)-AMP + GDP + phosphate + 2 H(+). Its pathway is purine metabolism; AMP biosynthesis via de novo pathway; AMP from IMP: step 1/2. Plays an important role in the de novo pathway of purine nucleotide biosynthesis. Catalyzes the first committed step in the biosynthesis of AMP from IMP. This chain is Adenylosuccinate synthetase, found in Pyrococcus horikoshii (strain ATCC 700860 / DSM 12428 / JCM 9974 / NBRC 100139 / OT-3).